Here is a 372-residue protein sequence, read N- to C-terminus: Testis-specific serine/threonine-protein kinase 5 (372 aa).

Residues 27-302 (LLSSKKIGSG…LQQVAAHCWM (276 aa)) enclose the Protein kinase domain. Residues 33-41 (IGSGAFSKV) and K72 contribute to the ATP site. The Proton acceptor role is filled by D173. Residues 314–372 (GAPREQDHSWSTVAPDNTEPDRDTRHARSKGSSSSSGRTSPRRPSLAQLCNTWKPAPEQ) are disordered. Over residues 343-358 (KGSSSSSGRTSPRRPS) the composition is skewed to low complexity.

It belongs to the protein kinase superfamily. CAMK Ser/Thr protein kinase family. Mg(2+) is required as a cofactor. Autophosphorylated.

It carries out the reaction L-seryl-[protein] + ATP = O-phospho-L-seryl-[protein] + ADP + H(+). The catalysed reaction is L-threonyl-[protein] + ATP = O-phospho-L-threonyl-[protein] + ADP + H(+). With respect to regulation, activated by phosphorylation on Thr-207, potentially by autophosphorylation. May be involved in a signaling pathway during male germ cell development or mature sperm function. The sequence is that of Testis-specific serine/threonine-protein kinase 5 from Mus musculus (Mouse).